The primary structure comprises 919 residues: Envelope glycoprotein B (919 aa).

An N-terminal signal peptide occupies residues 1-28 (MSKDSTSLGVRTIVIACLVLLGCCIVEA). Topologically, residues 29–788 (VPTTPSSQPS…SGIASFINNP (760 aa)) are virion surface. Disulfide bonds link Cys81–Cys586, Cys98–Cys542, Cys172–Cys237, Cys330–Cys378, and Cys607–Cys647. Asn106 is a glycosylation site (N-linked (GlcNAc...) asparagine; by host). The interval 138-144 (VWKGYSH) is involved in fusion and/or binding to host membrane. N-linked (GlcNAc...) asparagine; by host glycosylation occurs at Asn216. An involved in fusion and/or binding to host membrane region spans residues 223 to 231 (GWMPWRHYT). Asn321, Asn364, Asn438, Asn456, Asn493, Asn496, and Asn499 each carry an N-linked (GlcNAc...) asparagine; by host glycan. 2 N-linked (GlcNAc...) asparagine; by host glycosylation sites follow: Asn666 and Asn688. Hydrophobic membrane proximal region stretches follow at residues 733–786 (IDSV…SFIN) and 765–785 (TLVL…ASFI). The chain crosses the membrane as a helical span at residues 789–809 (FGGLAIGLLVIAGLVAAFFAY). Over 810–919 (RYVMQLRSNP…DDPMESEKMV (110 aa)) the chain is Intravirion. Positions 864–867 (YMSM) match the Golgi targeting motif. A disordered region spans residues 900-919 (RGPKYTRLREDDPMESEKMV). Residues 904 to 907 (YTRL) carry the Internalization motif motif. Positions 906–919 (RLREDDPMESEKMV) are enriched in basic and acidic residues.

Belongs to the herpesviridae glycoprotein B family. As to quaternary structure, homotrimer; disulfide-linked. Binds to heparan sulfate proteoglycans. Interacts with gH/gL heterodimer. Post-translationally, a proteolytic cleavage by host furin generates two subunits that remain linked by disulfide bonds.

The protein localises to the virion membrane. The protein resides in the host cell membrane. Its subcellular location is the host endosome membrane. It localises to the host Golgi apparatus membrane. Functionally, envelope glycoprotein that forms spikes at the surface of virion envelope. Essential for the initial attachment to heparan sulfate moieties of the host cell surface proteoglycans. Involved in fusion of viral and cellular membranes leading to virus entry into the host cell. Following initial binding to its host receptors, membrane fusion is mediated by the fusion machinery composed at least of gB and the heterodimer gH/gL. May be involved in the fusion between the virion envelope and the outer nuclear membrane during virion egress. The chain is Envelope glycoprotein B from Equus caballus (Horse).